We begin with the raw amino-acid sequence, 466 residues long: 3-isopropylmalate dehydratase large subunit (466 aa).

Positions 347, 407, and 410 each coordinate [4Fe-4S] cluster.

Belongs to the aconitase/IPM isomerase family. LeuC type 1 subfamily. Heterodimer of LeuC and LeuD. It depends on [4Fe-4S] cluster as a cofactor.

The catalysed reaction is (2R,3S)-3-isopropylmalate = (2S)-2-isopropylmalate. It functions in the pathway amino-acid biosynthesis; L-leucine biosynthesis; L-leucine from 3-methyl-2-oxobutanoate: step 2/4. Its function is as follows. Catalyzes the isomerization between 2-isopropylmalate and 3-isopropylmalate, via the formation of 2-isopropylmaleate. The sequence is that of 3-isopropylmalate dehydratase large subunit from Escherichia coli O157:H7.